The following is a 332-amino-acid chain: Probable endo-beta-1,4-glucanase B (332 aa).

Residues 1 to 18 form the signal peptide; sequence MKFQSTLLLAAAAGSALA. N-linked (GlcNAc...) asparagine glycosylation is found at asparagine 38 and asparagine 100. Glutamate 160 (proton donor) is an active-site residue. The N-linked (GlcNAc...) asparagine glycan is linked to asparagine 212. The Nucleophile role is filled by glutamate 267. A glycan (N-linked (GlcNAc...) asparagine) is linked at asparagine 289.

Belongs to the glycosyl hydrolase 5 (cellulase A) family.

It localises to the secreted. It carries out the reaction Endohydrolysis of (1-&gt;4)-beta-D-glucosidic linkages in cellulose, lichenin and cereal beta-D-glucans.. Functionally, has endoglucanase activity on substrates containing beta-1,4 glycosidic bonds, like in carboxymethylcellulose (CMC), hydroxyethylcellulose (HEC) and beta-glucan. Involved in the degradation of complex natural cellulosic substrates. This chain is Probable endo-beta-1,4-glucanase B (eglB), found in Aspergillus kawachii (strain NBRC 4308) (White koji mold).